We begin with the raw amino-acid sequence, 428 residues long: Enolase (428 aa).

Q165 is a (2R)-2-phosphoglycerate binding site. E207 serves as the catalytic Proton donor. Mg(2+) contacts are provided by D244, E285, and D312. (2R)-2-phosphoglycerate-binding residues include K337, R366, S367, and K388. K337 acts as the Proton acceptor in catalysis.

It belongs to the enolase family. As to quaternary structure, component of the RNA degradosome, a multiprotein complex involved in RNA processing and mRNA degradation. It depends on Mg(2+) as a cofactor.

The protein resides in the cytoplasm. Its subcellular location is the secreted. It is found in the cell surface. The enzyme catalyses (2R)-2-phosphoglycerate = phosphoenolpyruvate + H2O. The protein operates within carbohydrate degradation; glycolysis; pyruvate from D-glyceraldehyde 3-phosphate: step 4/5. Its function is as follows. Catalyzes the reversible conversion of 2-phosphoglycerate (2-PG) into phosphoenolpyruvate (PEP). It is essential for the degradation of carbohydrates via glycolysis. The chain is Enolase from Coxiella burnetii (strain CbuK_Q154) (Coxiella burnetii (strain Q154)).